Here is a 95-residue protein sequence, read N- to C-terminus: Aspartyl/glutamyl-tRNA(Asn/Gln) amidotransferase subunit C (95 aa).

It belongs to the GatC family. In terms of assembly, heterotrimer of A, B and C subunits.

It catalyses the reaction L-glutamyl-tRNA(Gln) + L-glutamine + ATP + H2O = L-glutaminyl-tRNA(Gln) + L-glutamate + ADP + phosphate + H(+). The catalysed reaction is L-aspartyl-tRNA(Asn) + L-glutamine + ATP + H2O = L-asparaginyl-tRNA(Asn) + L-glutamate + ADP + phosphate + 2 H(+). Allows the formation of correctly charged Asn-tRNA(Asn) or Gln-tRNA(Gln) through the transamidation of misacylated Asp-tRNA(Asn) or Glu-tRNA(Gln) in organisms which lack either or both of asparaginyl-tRNA or glutaminyl-tRNA synthetases. The reaction takes place in the presence of glutamine and ATP through an activated phospho-Asp-tRNA(Asn) or phospho-Glu-tRNA(Gln). This Azoarcus sp. (strain BH72) protein is Aspartyl/glutamyl-tRNA(Asn/Gln) amidotransferase subunit C.